Reading from the N-terminus, the 492-residue chain is Tumor necrosis factor receptor superfamily member 8 (492 aa).

The first 18 residues, 1–18 (MSILLKAAGLLFLGMLQA), serve as a signal peptide directing secretion. Residues 19–282 (FPKDRPLDTT…STGTPFLDPG (264 aa)) are Extracellular-facing. TNFR-Cys repeat units lie at residues 57 to 104 (PCPQ…PRIC) and 105 to 141 (ECQP…NTIC). Disulfide bonds link Cys58–Cys80, Cys83–Cys96, Cys86–Cys104, and Cys123–Cys141. The interval 141-178 (CDLPSPGSGPNGSNPDDCKTLTSHTTPQAIPTLESPAN) is disordered. Residues 144–155 (PSPGSGPNGSNP) show a composition bias toward low complexity. 3 N-linked (GlcNAc...) asparagine glycosylation sites follow: Asn151, Asn178, and Asn224. Over residues 160-178 (TLTSHTTPQAIPTLESPAN) the composition is skewed to polar residues. A helical membrane pass occupies residues 283-303 (SMLFWVAMVVLLVGSASFLLC). Residues 304 to 492 (YWKACRRRFQ…DHEPTTVSEK (189 aa)) lie on the Cytoplasmic side of the membrane. Ser334 and Ser348 each carry phosphoserine. Disordered regions lie at residues 336–366 (PTEK…PPAV) and 432–492 (PEGR…VSEK). A compositionally biased stretch (polar residues) spans 339–360 (KLTQLQRSGSVTDSSAGHTLSP). 2 stretches are compositionally biased toward basic and acidic residues: residues 450 to 459 (EVDHTPHYPE) and 478 to 492 (EGGK…VSEK).

This sequence belongs to the TNFR8 family. Interacts with TRAF1, TRAF2, TRAF3 and TRAF5. As to expression, very low level of expression. Detected in spleen, thymus and lung. Highly expressed in HTLV-1 infected T-cell lines.

It is found in the cell membrane. In terms of biological role, receptor for TNFSF8/CD30L. May play a role in the regulation of cellular growth and transformation of activated lymphoblasts. Regulates gene expression through activation of NF-kappa-B. In Rattus norvegicus (Rat), this protein is Tumor necrosis factor receptor superfamily member 8.